Reading from the N-terminus, the 197-residue chain is Nucleoid occlusion factor SlmA (197 aa).

The HTH tetR-type domain maps to 7–67 (INRREHILQC…GLIEFIEESL (61 aa)). Residues 30-49 (TTAKLASEVGVSEAALYRHF) constitute a DNA-binding region (H-T-H motif). Residues 109 to 136 (DALLGENERLRSRISNLFAKIETQLKQI) are a coiled coil.

It belongs to the nucleoid occlusion factor SlmA family. As to quaternary structure, homodimer. Interacts with FtsZ.

It localises to the cytoplasm. It is found in the nucleoid. In terms of biological role, required for nucleoid occlusion (NO) phenomenon, which prevents Z-ring formation and cell division over the nucleoid. Acts as a DNA-associated cell division inhibitor that binds simultaneously chromosomal DNA and FtsZ, and disrupts the assembly of FtsZ polymers. SlmA-DNA-binding sequences (SBS) are dispersed on non-Ter regions of the chromosome, preventing FtsZ polymerization at these regions. The sequence is that of Nucleoid occlusion factor SlmA from Shewanella baltica (strain OS223).